A 105-amino-acid polypeptide reads, in one-letter code: Thioredoxin (105 aa).

Residues 2 to 105 (VKQIESKYAF…KLEATINELI (104 aa)) enclose the Thioredoxin domain. Lys-3 is modified (N6-acetyllysine). Lys-8 is modified (N6-succinyllysine). Catalysis depends on nucleophile residues Cys-32 and Cys-35. A disulfide bridge connects residues Cys-32 and Cys-35. N6-acetyllysine is present on Lys-39. Residues Cys-62 and Cys-69 each carry the S-nitrosocysteine modification. The residue at position 73 (Cys-73) is an S-nitrosocysteine; alternate. N6-acetyllysine; alternate is present on Lys-94. Lys-94 carries the post-translational modification N6-succinyllysine; alternate.

Belongs to the thioredoxin family. In terms of assembly, homodimer; disulfide-linked. Interacts with TXNIP through the redox-active site. Interacts with MAP3K5 and CASP3. Interacts with APEX1; the interaction stimulates the FOS/JUN AP-1 DNA-binding activity in a redox-dependent manner. In the fully reduced protein, both Cys-69 and Cys-73 are nitrosylated in response to nitric oxide (NO). When two disulfide bonds are present in the protein, only Cys-73 is nitrosylated. Cys-73 can serve as donor for nitrosylation of target proteins. As to expression, erythrocytes.

It localises to the nucleus. It is found in the cytoplasm. Its subcellular location is the secreted. Participates in various redox reactions through the reversible oxidation of its active center dithiol to a disulfide and catalyzes dithiol-disulfide exchange reactions. Plays a role in the reversible S-nitrosylation of cysteine residues in target proteins, and thereby contributes to the response to intracellular nitric oxide. Nitrosylates the active site Cys of CASP3 in response to nitric oxide (NO), and thereby inhibits caspase-3 activity. Induces the FOS/JUN AP-1 DNA binding activity in ionizing radiation (IR) cells through its oxidation/reduction status and stimulates AP-1 transcriptional activity. This is Thioredoxin (TXN) from Sus scrofa (Pig).